Here is a 123-residue protein sequence, read N- to C-terminus: Basic myotoxic phospholipase A2 PhTX-II (123 aa).

7 cysteine pairs are disulfide-bonded: cysteine 26-cysteine 116, cysteine 28-cysteine 45, cysteine 44-cysteine 95, cysteine 50-cysteine 123, cysteine 51-cysteine 88, cysteine 58-cysteine 81, and cysteine 75-cysteine 86. 3 residues coordinate Ca(2+): tyrosine 27, glycine 29, and glycine 31. Histidine 48 is a catalytic residue. Position 49 (aspartate 49) interacts with Ca(2+). Aspartate 89 is a catalytic residue.

As to quaternary structure, monomer. The cofactor is Ca(2+). As to expression, expressed by the venom gland.

It localises to the secreted. It catalyses the reaction a 1,2-diacyl-sn-glycero-3-phosphocholine + H2O = a 1-acyl-sn-glycero-3-phosphocholine + a fatty acid + H(+). Its activity is regulated as follows. P-bromophenacyl bromide (BPB) completely inhibits the catalytic and edematogenic activities. Enzymatic activity is also diminished by EDTA, heparin and crotapotins F2 and F3 from C.d.collilineatus. Inhibited by divalent cations different from calcium ions (cadmium, magnesium, manganese, zinc), since they act as competitive antagonists of this cofactor. Snake venom phospholipase A2 (PLA2) that induces myotoxicity and local edema in mice. In addition, it causes neuromuscular blockade in avian neuromuscular preparations with a significant direct action on skeletal muscle function. Myotoxic action is exerted by both enzymatic and non-enzymatic mechanisms. PLA2 catalyzes the calcium-dependent hydrolysis of the 2-acyl groups in 3-sn-phosphoglycerides. The chain is Basic myotoxic phospholipase A2 PhTX-II from Bothrocophias hyoprora (Amazonian hognose viper).